A 396-amino-acid chain; its full sequence is NADH-quinone oxidoreductase subunit D 1 (396 aa).

This sequence belongs to the complex I 49 kDa subunit family. In terms of assembly, NDH-1 is composed of 14 different subunits. Subunits NuoB, C, D, E, F, and G constitute the peripheral sector of the complex.

It is found in the cell inner membrane. It catalyses the reaction a quinone + NADH + 5 H(+)(in) = a quinol + NAD(+) + 4 H(+)(out). Its function is as follows. NDH-1 shuttles electrons from NADH, via FMN and iron-sulfur (Fe-S) centers, to quinones in the respiratory chain. The immediate electron acceptor for the enzyme in this species is believed to be ubiquinone. Couples the redox reaction to proton translocation (for every two electrons transferred, four hydrogen ions are translocated across the cytoplasmic membrane), and thus conserves the redox energy in a proton gradient. This chain is NADH-quinone oxidoreductase subunit D 1, found in Nitrobacter hamburgensis (strain DSM 10229 / NCIMB 13809 / X14).